An 84-amino-acid polypeptide reads, in one-letter code: Small ribosomal subunit protein uS17 (84 aa).

This sequence belongs to the universal ribosomal protein uS17 family. In terms of assembly, part of the 30S ribosomal subunit.

Its function is as follows. One of the primary rRNA binding proteins, it binds specifically to the 5'-end of 16S ribosomal RNA. In Buchnera aphidicola subsp. Cinara cedri (strain Cc), this protein is Small ribosomal subunit protein uS17.